The primary structure comprises 750 residues: Photosystem I P700 chlorophyll a apoprotein A1 (750 aa).

8 helical membrane passes run 70–93 (VFSA…FHGA), 156–179 (LYCT…FHYH), 195–219 (LNHH…HVSL), 291–309 (IAHH…GHMY), 346–369 (WHAQ…HHMY), 385–411 (LSLF…IFMV), 433–455 (AIIS…LYIH), and 531–549 (FLVH…LILL). [4Fe-4S] cluster is bound by residues cysteine 573 and cysteine 582. 2 consecutive transmembrane segments (helical) span residues 589-610 (HVFL…HFSW) and 664-686 (LSAY…MFLF). Histidine 675 contributes to the chlorophyll a' binding site. Chlorophyll a-binding residues include methionine 683 and tyrosine 691. Tryptophan 692 contacts phylloquinone. Residues 724-744 (AVGVTHYLLGGIATTWAFFLA) form a helical membrane-spanning segment.

The protein belongs to the PsaA/PsaB family. As to quaternary structure, the PsaA/B heterodimer binds the P700 chlorophyll special pair and subsequent electron acceptors. PSI consists of a core antenna complex that captures photons, and an electron transfer chain that converts photonic excitation into a charge separation. The eukaryotic PSI reaction center is composed of at least 11 subunits. P700 is a chlorophyll a/chlorophyll a' dimer, A0 is one or more chlorophyll a, A1 is one or both phylloquinones and FX is a shared 4Fe-4S iron-sulfur center. serves as cofactor.

Its subcellular location is the plastid. It is found in the chloroplast thylakoid membrane. The enzyme catalyses reduced [plastocyanin] + hnu + oxidized [2Fe-2S]-[ferredoxin] = oxidized [plastocyanin] + reduced [2Fe-2S]-[ferredoxin]. Its function is as follows. PsaA and PsaB bind P700, the primary electron donor of photosystem I (PSI), as well as the electron acceptors A0, A1 and FX. PSI is a plastocyanin-ferredoxin oxidoreductase, converting photonic excitation into a charge separation, which transfers an electron from the donor P700 chlorophyll pair to the spectroscopically characterized acceptors A0, A1, FX, FA and FB in turn. Oxidized P700 is reduced on the lumenal side of the thylakoid membrane by plastocyanin. The sequence is that of Photosystem I P700 chlorophyll a apoprotein A1 from Liriodendron tulipifera (Tuliptree).